Here is a 253-residue protein sequence, read N- to C-terminus: Triosephosphate isomerase (253 aa).

A substrate-binding site is contributed by 9 to 11 (NWK). Histidine 95 serves as the catalytic Electrophile. The Proton acceptor role is filled by glutamate 167. Substrate is bound by residues glycine 173, serine 213, and 234–235 (GG). Residue serine 213 is modified to Phosphoserine.

It belongs to the triosephosphate isomerase family. As to quaternary structure, homodimer.

The protein resides in the cytoplasm. The enzyme catalyses D-glyceraldehyde 3-phosphate = dihydroxyacetone phosphate. It participates in carbohydrate biosynthesis; gluconeogenesis. It functions in the pathway carbohydrate degradation; glycolysis; D-glyceraldehyde 3-phosphate from glycerone phosphate: step 1/1. Its function is as follows. Involved in the gluconeogenesis. Catalyzes stereospecifically the conversion of dihydroxyacetone phosphate (DHAP) to D-glyceraldehyde-3-phosphate (G3P). The chain is Triosephosphate isomerase from Geobacillus thermodenitrificans (strain NG80-2).